Here is a 184-residue protein sequence, read N- to C-terminus: Photosystem I assembly protein Ycf4 (184 aa).

Helical transmembrane passes span 22–42 (FCWA…GTSS) and 57–77 (ILFF…LFIS).

Belongs to the Ycf4 family.

The protein localises to the plastid. The protein resides in the chloroplast thylakoid membrane. Functionally, seems to be required for the assembly of the photosystem I complex. The sequence is that of Photosystem I assembly protein Ycf4 from Panax ginseng (Korean ginseng).